Consider the following 838-residue polypeptide: AP-4 complex subunit beta (838 aa).

The interval 582 to 673 (NSSKQTTSIN…NQNNNQNNNQ (92 aa)) is hinge. A disordered region spans residues 648–683 (ITDGNQNNNQNNNQNNNQNNNQNNNQNNQNNNNQNN). Over residues 652–683 (NQNNNQNNNQNNNQNNNQNNNQNNQNNNNQNN) the composition is skewed to low complexity. The tract at residues 674 to 838 (NNQNNNNQNN…LSIPIPKIFN (165 aa)) is ear.

The protein belongs to the adaptor complexes large subunit family. In terms of assembly, may be part of the adaptor protein complex 4 (AP-4), a heterotetramer composed of two large adaptins (epsilon-type subunitand beta-type subunit), a medium adaptin (mu-type subunit) and a small adaptin (sigma-type).

It is found in the golgi apparatus. The protein localises to the trans-Golgi network membrane. Functionally, probable component of an adaptor protein complex. Adaptor protein complexes are vesicle coat components involved both in vesicle formation and cargo selection. They control the vesicular transport of proteins in different trafficking pathways. This is AP-4 complex subunit beta (ap4b1) from Dictyostelium discoideum (Social amoeba).